The chain runs to 280 residues: 4-diphosphocytidyl-2-C-methyl-D-erythritol kinase (280 aa).

Lys9 is an active-site residue. Residue 92–102 coordinates ATP; that stretch reads PMGGGLGGGSS. Asp134 is an active-site residue.

It belongs to the GHMP kinase family. IspE subfamily.

It carries out the reaction 4-CDP-2-C-methyl-D-erythritol + ATP = 4-CDP-2-C-methyl-D-erythritol 2-phosphate + ADP + H(+). The protein operates within isoprenoid biosynthesis; isopentenyl diphosphate biosynthesis via DXP pathway; isopentenyl diphosphate from 1-deoxy-D-xylulose 5-phosphate: step 3/6. Functionally, catalyzes the phosphorylation of the position 2 hydroxy group of 4-diphosphocytidyl-2C-methyl-D-erythritol. This chain is 4-diphosphocytidyl-2-C-methyl-D-erythritol kinase, found in Nitrosococcus oceani (strain ATCC 19707 / BCRC 17464 / JCM 30415 / NCIMB 11848 / C-107).